Here is a 356-residue protein sequence, read N- to C-terminus: Outer spore wall protein LDS2 (356 aa).

Residues 1–92 lie on the Cytoplasmic side of the membrane; it reads MSTRPQPDWY…ISESVGNSDY (92 aa). A helical membrane pass occupies residues 93-113; sequence LHLFFLIFGYYLLNLLLIVAF. Over 114 to 115 the chain is Extracellular; the sequence is TS. A helical transmembrane segment spans residues 116-136; it reads ILAWSLLVCIYLPFLGLFALP. The Cytoplasmic segment spans residues 137–213; it reads LAYMQTILIS…KRFYLVSLPQ (77 aa). The chain crosses the membrane as a helical span at residues 214-234; that stretch reads FFIFFFWYIFIAFMFLLLLLV. Topologically, residues 235–294 are extracellular; the sequence is PIVGPITINMLPFSPGMGFYYFEPYFVDVLHLDSRKLSKVYYKGFAKWLLYSISSGLLES. The chain crosses the membrane as a helical span at residues 295–315; sequence IPILGGLFIGTNAVGASLWIV. At 316 to 356 the chain is on the cytoplasmic side; sequence KEIKDRDQPAVPPSPPAEPEEPTVGSYAPPIQQSIAHINPP. The interval 322-356 is disordered; it reads DQPAVPPSPPAEPEEPTVGSYAPPIQQSIAHINPP. The segment covering 346–356 has biased composition (polar residues); sequence IQQSIAHINPP.

This sequence belongs to the LDS family.

The protein resides in the prospore membrane. It is found in the lipid droplet. It localises to the spore wall. In terms of biological role, involved in spore wall assembly. This is Outer spore wall protein LDS2 from Saccharomyces cerevisiae (strain ATCC 204508 / S288c) (Baker's yeast).